Consider the following 97-residue polypeptide: Aspartyl/glutamyl-tRNA(Asn/Gln) amidotransferase subunit C (97 aa).

This sequence belongs to the GatC family. Heterotrimer of A, B and C subunits.

The catalysed reaction is L-glutamyl-tRNA(Gln) + L-glutamine + ATP + H2O = L-glutaminyl-tRNA(Gln) + L-glutamate + ADP + phosphate + H(+). It carries out the reaction L-aspartyl-tRNA(Asn) + L-glutamine + ATP + H2O = L-asparaginyl-tRNA(Asn) + L-glutamate + ADP + phosphate + 2 H(+). Functionally, allows the formation of correctly charged Asn-tRNA(Asn) or Gln-tRNA(Gln) through the transamidation of misacylated Asp-tRNA(Asn) or Glu-tRNA(Gln) in organisms which lack either or both of asparaginyl-tRNA or glutaminyl-tRNA synthetases. The reaction takes place in the presence of glutamine and ATP through an activated phospho-Asp-tRNA(Asn) or phospho-Glu-tRNA(Gln). This chain is Aspartyl/glutamyl-tRNA(Asn/Gln) amidotransferase subunit C, found in Listeria welshimeri serovar 6b (strain ATCC 35897 / DSM 20650 / CCUG 15529 / CIP 8149 / NCTC 11857 / SLCC 5334 / V8).